The sequence spans 177 residues: Large ribosomal subunit protein uL6 (177 aa).

Belongs to the universal ribosomal protein uL6 family. Part of the 50S ribosomal subunit.

In terms of biological role, this protein binds to the 23S rRNA, and is important in its secondary structure. It is located near the subunit interface in the base of the L7/L12 stalk, and near the tRNA binding site of the peptidyltransferase center. The polypeptide is Large ribosomal subunit protein uL6 (Aliivibrio salmonicida (strain LFI1238) (Vibrio salmonicida (strain LFI1238))).